Consider the following 104-residue polypeptide: MIQKAFKMKLFEGKEEEYKKRHNEIWPDLVKELKSHGTSKYLIFYDKDTNILFSYIEMENEELWDEIAETDACKKWWAFMKDIMETNPDNSPISVELSNVFNLK.

Tyrosine 18 lines the substrate pocket. Residue histidine 22 is the Proton donor of the active site. Substrate-binding positions include tyrosine 41 and 76–77 (WW).

This sequence belongs to the rhamnose mutarotase family. As to quaternary structure, homodimer.

The protein localises to the cytoplasm. It carries out the reaction alpha-L-rhamnose = beta-L-rhamnose. It participates in carbohydrate metabolism; L-rhamnose metabolism. In terms of biological role, involved in the anomeric conversion of L-rhamnose. The sequence is that of L-rhamnose mutarotase from Clostridium beijerinckii (strain ATCC 51743 / NCIMB 8052) (Clostridium acetobutylicum).